A 196-amino-acid chain; its full sequence is Large ribosomal subunit protein bL25 (196 aa).

This sequence belongs to the bacterial ribosomal protein bL25 family. CTC subfamily. As to quaternary structure, part of the 50S ribosomal subunit; part of the 5S rRNA/L5/L18/L25 subcomplex. Contacts the 5S rRNA. Binds to the 5S rRNA independently of L5 and L18.

Its function is as follows. This is one of the proteins that binds to the 5S RNA in the ribosome where it forms part of the central protuberance. In Amoebophilus asiaticus (strain 5a2), this protein is Large ribosomal subunit protein bL25.